The sequence spans 911 residues: DNA mismatch repair protein MutS (911 aa).

Residues 1–95 (MALQGNLFGD…PWSHHSQVTP (95 aa)) are disordered. The segment covering 23 to 42 (KRQDEPDQLDDHELTQDAKQ) has biased composition (basic and acidic residues). 727–734 (GPNASGKS) contacts ATP.

It belongs to the DNA mismatch repair MutS family.

Functionally, this protein is involved in the repair of mismatches in DNA. It is possible that it carries out the mismatch recognition step. This protein has a weak ATPase activity. The protein is DNA mismatch repair protein MutS of Synechococcus sp. (strain CC9311).